Reading from the N-terminus, the 122-residue chain is Large-conductance mechanosensitive channel (122 aa).

The next 2 membrane-spanning stretches (helical) occupy residues 29-49 and 66-86; these read FGKI…GLIF and GVFI…FLFI.

This sequence belongs to the MscL family. Homopentamer.

Its subcellular location is the cell membrane. Its function is as follows. Channel that opens in response to stretch forces in the membrane lipid bilayer. May participate in the regulation of osmotic pressure changes within the cell. This chain is Large-conductance mechanosensitive channel, found in Macrococcus caseolyticus (strain JCSC5402) (Macrococcoides caseolyticum).